Here is a 229-residue protein sequence, read N- to C-terminus: Flagellar L-ring protein (229 aa).

An N-terminal signal peptide occupies residues 1-23; it reads MNPLTRVALAVAAFAALVLALSA. The N-palmitoyl cysteine moiety is linked to residue Cys24. Cys24 carries the S-diacylglycerol cysteine lipid modification.

The protein belongs to the FlgH family. The basal body constitutes a major portion of the flagellar organelle and consists of four rings (L,P,S, and M) mounted on a central rod.

The protein localises to the cell outer membrane. Its subcellular location is the bacterial flagellum basal body. In terms of biological role, assembles around the rod to form the L-ring and probably protects the motor/basal body from shearing forces during rotation. This Anaeromyxobacter sp. (strain K) protein is Flagellar L-ring protein.